Reading from the N-terminus, the 38-residue chain is Potassium channel toxin alpha-KTx 3.12 (38 aa).

3 cysteine pairs are disulfide-bonded: cysteine 8–cysteine 28, cysteine 14–cysteine 33, and cysteine 18–cysteine 35. The residue at position 38 (lysine 38) is a Lysine amide.

Belongs to the short scorpion toxin superfamily. Potassium channel inhibitor family. Alpha-KTx 03 subfamily. In terms of tissue distribution, expressed by the venom gland.

It is found in the secreted. Functionally, potent inhibitor of voltage-dependent potassium channels, with a preference for Kv1.3/KCNA3 versus Kv1.2/KCNA2. In Androctonus amoreuxi (African fattail scorpion), this protein is Potassium channel toxin alpha-KTx 3.12.